The primary structure comprises 271 residues: Formamidopyrimidine-DNA glycosylase (271 aa).

Residue Pro-2 is the Schiff-base intermediate with DNA of the active site. The Proton donor role is filled by Glu-3. The active-site Proton donor; for beta-elimination activity is the Lys-57. 3 residues coordinate DNA: His-90, Arg-109, and Lys-151. The FPG-type zinc-finger motif lies at 236–270 (HVYGRGGDTCTHCGQLLSEIRLGQRATVFCSICQQ). Arg-260 functions as the Proton donor; for delta-elimination activity in the catalytic mechanism.

Belongs to the FPG family. In terms of assembly, monomer. It depends on Zn(2+) as a cofactor.

It catalyses the reaction Hydrolysis of DNA containing ring-opened 7-methylguanine residues, releasing 2,6-diamino-4-hydroxy-5-(N-methyl)formamidopyrimidine.. The catalysed reaction is 2'-deoxyribonucleotide-(2'-deoxyribose 5'-phosphate)-2'-deoxyribonucleotide-DNA = a 3'-end 2'-deoxyribonucleotide-(2,3-dehydro-2,3-deoxyribose 5'-phosphate)-DNA + a 5'-end 5'-phospho-2'-deoxyribonucleoside-DNA + H(+). Functionally, involved in base excision repair of DNA damaged by oxidation or by mutagenic agents. Acts as a DNA glycosylase that recognizes and removes damaged bases. Has a preference for oxidized purines, such as 7,8-dihydro-8-oxoguanine (8-oxoG). Has AP (apurinic/apyrimidinic) lyase activity and introduces nicks in the DNA strand. Cleaves the DNA backbone by beta-delta elimination to generate a single-strand break at the site of the removed base with both 3'- and 5'-phosphates. This Shewanella piezotolerans (strain WP3 / JCM 13877) protein is Formamidopyrimidine-DNA glycosylase.